We begin with the raw amino-acid sequence, 104 residues long: Ig kappa chain V region XP-1 (104 aa).

Residues 1–24 (ADIVMTQTPASVSEPVGGTVTIKC) form a framework-1 region. A complementarity-determining-1 region spans residues 25 to 35 (QASQSIFBBLA). The framework-2 stretch occupies residues 36-49 (WYQKPGZPPKGLLY). The interval 50–56 (TBYTLAS) is complementarity-determining-2. The segment at 57–88 (GVSSRFSGGGSGTBFTLTISDLECABAATYYC) is framework-3. The tract at residues 89 to 100 (EXTGVSZBXBKG) is complementarity-determining-3. Positions 101 to 104 (FGGG) are framework-4.

The protein is Ig kappa chain V region XP-1 of Oryctolagus cuniculus (Rabbit).